An 82-amino-acid polypeptide reads, in one-letter code: Omega-ctenitoxin-Pn1a (82 aa).

The signal sequence occupies residues 1-21 (MWLKIQVFLLAITLITLGIQA). Residues 22–37 (EPNSSPNNPLIEEEAR) constitute a propeptide that is removed on maturation. Disulfide bonds link Cys-39–Cys-54, Cys-46–Cys-59, Cys-53–Cys-70, and Cys-61–Cys-68. Residues 72–82 (KKFIEFFGGGK) constitute a propeptide that is removed on maturation.

It belongs to the neurotoxin 02 (plectoxin) family. As to expression, expressed by the venom gland.

The protein localises to the secreted. In terms of biological role, antagonist of L-type calcium channels (Cav1/CACNA1). Induces immediate clockwise gyration and flaccid paralysis after 6 hours at dose levels of 5 ug per mouse. The polypeptide is Omega-ctenitoxin-Pn1a (Phoneutria nigriventer (Brazilian armed spider)).